The sequence spans 352 residues: tRNA-specific 2-thiouridylase MnmA (352 aa).

ATP contacts are provided by residues 9 to 16 (ALSGGVDS) and M35. The Nucleophile role is filled by C96. C96 and C192 form a disulfide bridge. G120 lines the ATP pocket. Positions 142-144 (KDQ) are interaction with tRNA. C192 functions as the Cysteine persulfide intermediate in the catalytic mechanism. The interaction with tRNA stretch occupies residues 299-300 (RY).

Belongs to the MnmA/TRMU family.

Its subcellular location is the cytoplasm. It carries out the reaction S-sulfanyl-L-cysteinyl-[protein] + uridine(34) in tRNA + AH2 + ATP = 2-thiouridine(34) in tRNA + L-cysteinyl-[protein] + A + AMP + diphosphate + H(+). Functionally, catalyzes the 2-thiolation of uridine at the wobble position (U34) of tRNA, leading to the formation of s(2)U34. This Acidithiobacillus ferrooxidans (strain ATCC 23270 / DSM 14882 / CIP 104768 / NCIMB 8455) (Ferrobacillus ferrooxidans (strain ATCC 23270)) protein is tRNA-specific 2-thiouridylase MnmA.